The following is a 180-amino-acid chain: ADP-ribosylation factor 4 (180 aa).

The N-myristoyl glycine moiety is linked to residue G2. Residues 24–31 (GLDAAGKT), 67–71 (DVGGQ), and 126–129 (NKQD) each bind GTP. S147 carries the phosphoserine modification.

Belongs to the small GTPase superfamily. Arf family. In terms of assembly, forms a complex containing RAB11A, ASAP1, RAB3IP, RAP11FIP3 and ARF4; the complex promotes preciliary trafficking; the complex binds to RHO in photoreceptor cells and promotes RHO ciliary transport.

The protein localises to the golgi apparatus. The protein resides in the membrane. Its function is as follows. GTP-binding protein that functions as an allosteric activator of the cholera toxin catalytic subunit, an ADP-ribosyltransferase. Involved in protein trafficking; may modulate vesicle budding and uncoating within the Golgi apparatus. Part of the ciliary targeting complex containing Rab11, ASAP1, Rabin8/RAB3IP, RAB11FIP3 and ARF4, which direct preciliary vesicle trafficking to mother centriole and ciliogenesis initiation. The polypeptide is ADP-ribosylation factor 4 (ARF4) (Homo sapiens (Human)).